The chain runs to 68 residues: UPF0337 protein RB10934 (68 aa).

This sequence belongs to the UPF0337 (CsbD) family.

This is UPF0337 protein RB10934 from Rhodopirellula baltica (strain DSM 10527 / NCIMB 13988 / SH1).